The chain runs to 53 residues: UPF0391 membrane protein Acid_3618 (53 aa).

2 helical membrane-spanning segments follow: residues 6–26 (LVFL…LAGA) and 28–48 (VGIA…AFLM).

Belongs to the UPF0391 family.

The protein resides in the cell membrane. The protein is UPF0391 membrane protein Acid_3618 of Solibacter usitatus (strain Ellin6076).